A 316-amino-acid polypeptide reads, in one-letter code: Acetyl-coenzyme A carboxylase carboxyl transferase subunit alpha (316 aa).

Residues 35–292 form the CoA carboxyltransferase C-terminal domain; sequence EIEILSQKLE…KTYVLQELKD (258 aa).

It belongs to the AccA family. Acetyl-CoA carboxylase is a heterohexamer composed of biotin carboxyl carrier protein (AccB), biotin carboxylase (AccC) and two subunits each of ACCase subunit alpha (AccA) and ACCase subunit beta (AccD).

Its subcellular location is the cytoplasm. The enzyme catalyses N(6)-carboxybiotinyl-L-lysyl-[protein] + acetyl-CoA = N(6)-biotinyl-L-lysyl-[protein] + malonyl-CoA. The protein operates within lipid metabolism; malonyl-CoA biosynthesis; malonyl-CoA from acetyl-CoA: step 1/1. Functionally, component of the acetyl coenzyme A carboxylase (ACC) complex. First, biotin carboxylase catalyzes the carboxylation of biotin on its carrier protein (BCCP) and then the CO(2) group is transferred by the carboxyltransferase to acetyl-CoA to form malonyl-CoA. This Alkaliphilus oremlandii (strain OhILAs) (Clostridium oremlandii (strain OhILAs)) protein is Acetyl-coenzyme A carboxylase carboxyl transferase subunit alpha.